We begin with the raw amino-acid sequence, 81 residues long: Photosystem I iron-sulfur center (81 aa).

4Fe-4S ferredoxin-type domains follow at residues 2 to 31 (AHSVKIYDTCIGCTQCVRACPTDVLEMIPW) and 39 to 68 (IASAPRTEDCVGCKRCESACPTDFLSVRVY). Cys11, Cys14, Cys17, Cys21, Cys48, Cys51, Cys54, and Cys58 together coordinate [4Fe-4S] cluster.

As to quaternary structure, the eukaryotic PSI reaction center is composed of at least 11 subunits. [4Fe-4S] cluster serves as cofactor.

Its subcellular location is the plastid. The protein localises to the chloroplast thylakoid membrane. The catalysed reaction is reduced [plastocyanin] + hnu + oxidized [2Fe-2S]-[ferredoxin] = oxidized [plastocyanin] + reduced [2Fe-2S]-[ferredoxin]. Functionally, apoprotein for the two 4Fe-4S centers FA and FB of photosystem I (PSI); essential for photochemical activity. FB is the terminal electron acceptor of PSI, donating electrons to ferredoxin. The C-terminus interacts with PsaA/B/D and helps assemble the protein into the PSI complex. Required for binding of PsaD and PsaE to PSI. PSI is a plastocyanin-ferredoxin oxidoreductase, converting photonic excitation into a charge separation, which transfers an electron from the donor P700 chlorophyll pair to the spectroscopically characterized acceptors A0, A1, FX, FA and FB in turn. In Adiantum capillus-veneris (Maidenhair fern), this protein is Photosystem I iron-sulfur center.